The chain runs to 360 residues: Phosphoserine aminotransferase (360 aa).

R42 is a binding site for L-glutamate. Residues 76–77, W102, T152, D171, and Q194 each bind pyridoxal 5'-phosphate; that span reads AS. K195 carries the post-translational modification N6-(pyridoxal phosphate)lysine. Residue 236–237 participates in pyridoxal 5'-phosphate binding; sequence NT.

This sequence belongs to the class-V pyridoxal-phosphate-dependent aminotransferase family. SerC subfamily. Homodimer. The cofactor is pyridoxal 5'-phosphate.

The protein localises to the cytoplasm. The catalysed reaction is O-phospho-L-serine + 2-oxoglutarate = 3-phosphooxypyruvate + L-glutamate. It carries out the reaction 4-(phosphooxy)-L-threonine + 2-oxoglutarate = (R)-3-hydroxy-2-oxo-4-phosphooxybutanoate + L-glutamate. Its pathway is amino-acid biosynthesis; L-serine biosynthesis; L-serine from 3-phospho-D-glycerate: step 2/3. Functionally, catalyzes the reversible conversion of 3-phosphohydroxypyruvate to phosphoserine and of 3-hydroxy-2-oxo-4-phosphonooxybutanoate to phosphohydroxythreonine. The sequence is that of Phosphoserine aminotransferase from Geobacillus kaustophilus (strain HTA426).